The chain runs to 159 residues: MRIGHGFDVHAFGGEGPIIIGGVRIPYDKGLLAHSDGDVALHALTDALLGAAALGDIGKLFPDTDPAFKGADSRELLREAWRRIQAKGYTLGNVDVTIIAQAPKMLPHIPQMRVFIAEDLGCHMDDVNVKATTTEKLGFTGRGEGIACEAVALLIKAAK.

Residues aspartate 8 and histidine 10 each coordinate a divalent metal cation. 4-CDP-2-C-methyl-D-erythritol 2-phosphate contacts are provided by residues 8–10 (DVH) and 34–35 (HS). An a divalent metal cation-binding site is contributed by histidine 42. Residues 56-58 (DIG), 61-65 (FPDTD), 100-106 (AQAPKML), 132-135 (TTTE), phenylalanine 139, and arginine 142 contribute to the 4-CDP-2-C-methyl-D-erythritol 2-phosphate site.

The protein belongs to the IspF family. Homotrimer. The cofactor is a divalent metal cation.

The enzyme catalyses 4-CDP-2-C-methyl-D-erythritol 2-phosphate = 2-C-methyl-D-erythritol 2,4-cyclic diphosphate + CMP. Its pathway is isoprenoid biosynthesis; isopentenyl diphosphate biosynthesis via DXP pathway; isopentenyl diphosphate from 1-deoxy-D-xylulose 5-phosphate: step 4/6. Involved in the biosynthesis of isopentenyl diphosphate (IPP) and dimethylallyl diphosphate (DMAPP), two major building blocks of isoprenoid compounds. Catalyzes the conversion of 4-diphosphocytidyl-2-C-methyl-D-erythritol 2-phosphate (CDP-ME2P) to 2-C-methyl-D-erythritol 2,4-cyclodiphosphate (ME-CPP) with a corresponding release of cytidine 5-monophosphate (CMP). The chain is 2-C-methyl-D-erythritol 2,4-cyclodiphosphate synthase from Citrobacter koseri (strain ATCC BAA-895 / CDC 4225-83 / SGSC4696).